A 116-amino-acid polypeptide reads, in one-letter code: Large ribosomal subunit protein bL17 (116 aa).

This sequence belongs to the bacterial ribosomal protein bL17 family. Part of the 50S ribosomal subunit. Contacts protein L32.

This is Large ribosomal subunit protein bL17 from Sulfurimonas denitrificans (strain ATCC 33889 / DSM 1251) (Thiomicrospira denitrificans (strain ATCC 33889 / DSM 1251)).